A 493-amino-acid chain; its full sequence is GTPase Der (493 aa).

2 EngA-type G domains span residues 3–166 (PVVA…AEAL) and 206–379 (IKLA…KSAT). Residues 9–16 (GRPNVGKS), 56–60 (DTGGI), 118–121 (NKVD), 212–219 (GRPNVGKS), 259–263 (DTAGV), and 324–327 (NKWD) contribute to the GTP site. The 85-residue stretch at 380–464 (TRVGTSVLTR…PIRIQFQNSE (85 aa)) folds into the KH-like domain.

Belongs to the TRAFAC class TrmE-Era-EngA-EngB-Septin-like GTPase superfamily. EngA (Der) GTPase family. In terms of assembly, associates with the 50S ribosomal subunit.

GTPase that plays an essential role in the late steps of ribosome biogenesis. This is GTPase Der from Vibrio atlanticus (strain LGP32) (Vibrio splendidus (strain Mel32)).